The following is a 170-amino-acid chain: uncharacterized protein (170 aa).

The N-terminal stretch at Met-1 to Ala-26 is a signal peptide.

This is an uncharacterized protein from Bacillus subtilis (strain 168).